Here is a 197-residue protein sequence, read N- to C-terminus: FMN-dependent NADH:quinone oxidoreductase (197 aa).

FMN contacts are provided by residues Ser10, 16 to 18 (SQS), 93 to 96 (MYNF), and 137 to 140 (TRGG).

It belongs to the azoreductase type 1 family. As to quaternary structure, homodimer. FMN serves as cofactor.

The catalysed reaction is 2 a quinone + NADH + H(+) = 2 a 1,4-benzosemiquinone + NAD(+). It catalyses the reaction N,N-dimethyl-1,4-phenylenediamine + anthranilate + 2 NAD(+) = 2-(4-dimethylaminophenyl)diazenylbenzoate + 2 NADH + 2 H(+). Functionally, quinone reductase that provides resistance to thiol-specific stress caused by electrophilic quinones. Its function is as follows. Also exhibits azoreductase activity. Catalyzes the reductive cleavage of the azo bond in aromatic azo compounds to the corresponding amines. In Shewanella loihica (strain ATCC BAA-1088 / PV-4), this protein is FMN-dependent NADH:quinone oxidoreductase.